A 156-amino-acid chain; its full sequence is Snaclec A1 (156 aa).

The N-terminal stretch at 1–23 (MGRSISVSFGLLVVFLSLSGTGA) is a signal peptide. Cystine bridges form between C27-C38, C55-C154, and C129-C146. The region spanning 34–155 (HEGHCYKVFN…CGQPYRFTCE (122 aa)) is the C-type lectin domain.

This sequence belongs to the snaclec family. Heterodimer; disulfide-linked. In terms of tissue distribution, expressed by the venom gland.

It localises to the secreted. In terms of biological role, interferes with one step of hemostasis (modulation of platelet aggregation, or coagulation cascade, for example). This Macrovipera lebetinus (Levantine viper) protein is Snaclec A1.